We begin with the raw amino-acid sequence, 123 residues long: Large ribosomal subunit protein uL14 (123 aa).

It belongs to the universal ribosomal protein uL14 family. In terms of assembly, part of the 50S ribosomal subunit. Forms a cluster with proteins L3 and L19. In the 70S ribosome, L14 and L19 interact and together make contacts with the 16S rRNA in bridges B5 and B8.

Binds to 23S rRNA. Forms part of two intersubunit bridges in the 70S ribosome. This Actinobacillus pleuropneumoniae serotype 7 (strain AP76) protein is Large ribosomal subunit protein uL14.